We begin with the raw amino-acid sequence, 661 residues long: Methyl-accepting chemotaxis protein McpA (661 aa).

The Cytoplasmic segment spans residues 1 to 16; the sequence is MKKILQLIKQRSITRK. Residues 17-37 form a helical membrane-spanning segment; it reads LLVSFLSILIIPVVILAIFAY. Over 38–281 the chain is Extracellular; sequence QSASSSLDRQ…IHEAAQPVLH (244 aa). The Cache domain maps to 152-228; it reads ITDPYKTAST…QSGTELKGDW (77 aa). The chain crosses the membrane as a helical span at residues 282–302; it reads LALIVLAAAIIIGIIVMTLII. One can recognise an HAMP domain in the interval 303 to 355; that stretch reads RSITTPLKQLVGSSKRISEGDLTETIDIRSKDELGELGKSFNNMASSLRSLIH. The Cytoplasmic segment spans residues 303–661; sequence RSITTPLKQL…RDMTKRFKIE (359 aa). The residue at position 370 (E370) is a Glutamate methyl ester (Glu). The 237-residue stretch at 374–610 folds into the Methyl-accepting transducer domain; the sequence is SAAQTSKATE…EVSGASEHIA (237 aa). Deamidated glutamine occurs at positions 593 and 594. Q594 carries the post-translational modification Glutamate methyl ester (Gln). Residues E629 and E636 each carry the glutamate methyl ester (Glu) modification.

The protein belongs to the methyl-accepting chemotaxis (MCP) protein family. In terms of assembly, interacts with FloT. Deamidated by CheD on Gln-593 and Gln-594, producing glutamate residues. The glutamate residues are then methylated. Other additional sites are deamidated and methylated as well.

The protein localises to the cell membrane. It localises to the membrane raft. In terms of biological role, chemotactic-signal transducers respond to changes in the concentration of attractants and repellents in the environment, transduce a signal from the outside to the inside of the cell, and facilitate sensory adaptation through the variation of the level of methylation. All amino acids serve as attractants in B.subtilis, they appear to cause an increase in the turnover methyl groups, leading to methylation of an unidentified acceptor, while repellents have been shown to cause a decrease in methyl group turnover. The methyl groups are added by a methyltransferase and removed by a methylesterase. McpA is required for taxis towards glucose and alpha-methylglucoside. The sequence is that of Methyl-accepting chemotaxis protein McpA (mcpA) from Bacillus subtilis (strain 168).